An 824-amino-acid polypeptide reads, in one-letter code: Protein-glutamine gamma-glutamyltransferase K (824 aa).

A compositionally biased stretch (basic and acidic residues) spans 1–10 (MEGPRSDVGR). Disordered stretches follow at residues 1-44 (MEGP…GGRS) and 61-110 (DDWG…AAGD). Threonine 20 is subject to Phosphothreonine. 5 positions are modified to phosphoserine: serine 22, serine 70, serine 92, serine 100, and serine 103. Residues 65–76 (PEPSGSRSRGTS) show a composition bias toward low complexity. Over residues 85–100 (GDSRGRDSRGGRRPES) the composition is skewed to basic and acidic residues. Residues cysteine 385, histidine 444, and aspartate 467 contribute to the active site. Ca(2+)-binding residues include asparagine 507, aspartate 509, glutamate 556, and glutamate 561. A disordered region spans residues 801 to 824 (RGFSEAVGDSRSGENIPMAFRGGA). A Phosphoserine modification is found at serine 812.

It belongs to the transglutaminase superfamily. Transglutaminase family. Interacts with PLAAT4. The cofactor is Ca(2+). In terms of processing, palmitoylated. Post-translationally, the membrane anchorage region possesses a cluster of five cysteines within which fatty acid(s) may become thioester-linked. It is subject to phorbol ester-stimulated phosphorylation and is hypersensitive to proteolysis, which releases the enzyme in a soluble form. Tyrosine-phosphorylated.

It localises to the membrane. The catalysed reaction is L-glutaminyl-[protein] + L-lysyl-[protein] = [protein]-L-lysyl-N(6)-5-L-glutamyl-[protein] + NH4(+). Its function is as follows. Catalyzes the cross-linking of proteins and the conjugation of polyamines to proteins. Responsible for cross-linking epidermal proteins during formation of the stratum corneum. Involved in cell proliferation. The protein is Protein-glutamine gamma-glutamyltransferase K (Tgm1) of Rattus norvegicus (Rat).